Here is a 496-residue protein sequence, read N- to C-terminus: Probable glycine dehydrogenase (decarboxylating) subunit 2 (496 aa).

Residue K265 is modified to N6-(pyridoxal phosphate)lysine.

This sequence belongs to the GcvP family. C-terminal subunit subfamily. In terms of assembly, the glycine cleavage system is composed of four proteins: P, T, L and H. In this organism, the P 'protein' is a heterodimer of two subunits. Requires pyridoxal 5'-phosphate as cofactor.

The enzyme catalyses N(6)-[(R)-lipoyl]-L-lysyl-[glycine-cleavage complex H protein] + glycine + H(+) = N(6)-[(R)-S(8)-aminomethyldihydrolipoyl]-L-lysyl-[glycine-cleavage complex H protein] + CO2. Functionally, the glycine cleavage system catalyzes the degradation of glycine. The P protein binds the alpha-amino group of glycine through its pyridoxal phosphate cofactor; CO(2) is released and the remaining methylamine moiety is then transferred to the lipoamide cofactor of the H protein. The polypeptide is Probable glycine dehydrogenase (decarboxylating) subunit 2 (Thioalkalivibrio sulfidiphilus (strain HL-EbGR7)).